Consider the following 302-residue polypeptide: Sulfate adenylyltransferase subunit 2 2 (302 aa).

The protein belongs to the PAPS reductase family. CysD subfamily. As to quaternary structure, heterodimer composed of CysD, the smaller subunit, and CysN.

The catalysed reaction is sulfate + ATP + H(+) = adenosine 5'-phosphosulfate + diphosphate. The protein operates within sulfur metabolism; hydrogen sulfide biosynthesis; sulfite from sulfate: step 1/3. In terms of biological role, with CysN forms the ATP sulfurylase (ATPS) that catalyzes the adenylation of sulfate producing adenosine 5'-phosphosulfate (APS) and diphosphate, the first enzymatic step in sulfur assimilation pathway. APS synthesis involves the formation of a high-energy phosphoric-sulfuric acid anhydride bond driven by GTP hydrolysis by CysN coupled to ATP hydrolysis by CysD. The polypeptide is Sulfate adenylyltransferase subunit 2 2 (Alkalilimnicola ehrlichii (strain ATCC BAA-1101 / DSM 17681 / MLHE-1)).